Here is a 248-residue protein sequence, read N- to C-terminus: DNA/RNA-binding protein ALBA1 (248 aa).

The segment at 217–248 (GRDGGYRGGNRGGSRSGFRGGRGGFRGGRALS) is disordered. Over residues 222 to 248 (YRGGNRGGSRSGFRGGRGGFRGGRALS) the composition is skewed to gly residues.

The protein belongs to the histone-like Alba family. May form homodimers. Identified in a TARE6-associated complex consisting of over 30 proteins and including ALBA1, ALBA2 and ALBA4; the complex binds to the non-coding subtelomeric repeat region TARE6.

Its subcellular location is the nucleus. The protein resides in the chromosome. It localises to the telomere. The protein localises to the cytoplasm. Its function is as follows. Possesses DNA- and RNA-binding activities. During the asexual blood stages binds to a sub-population of mature mRNAs and regulates the timing of their translation. Binds to DNA with relaxed sequence specificity. Associates with the subtelomeric TARE6 repeats. The sequence is that of DNA/RNA-binding protein ALBA1 from Plasmodium falciparum (isolate 3D7).